A 417-amino-acid polypeptide reads, in one-letter code: Probable glucuronosyltransferase Os01g0926700 (417 aa).

The Cytoplasmic portion of the chain corresponds to 1–3; that stretch reads MRR. A helical; Signal-anchor for type II membrane protein membrane pass occupies residues 4–24; the sequence is WVLAIAILAAAVCFFLGAQAQ. Residues 25 to 417 are Lumenal-facing; it reads EVRQGHQTER…AGPVGDLKPW (393 aa). 2 N-linked (GlcNAc...) asparagine glycosylation sites follow: N144 and N405.

Belongs to the glycosyltransferase 47 family.

Its subcellular location is the golgi apparatus membrane. Involved in the synthesis of glucuronoxylan hemicellulose in secondary cell walls. The sequence is that of Probable glucuronosyltransferase Os01g0926700 from Oryza sativa subsp. japonica (Rice).